The primary structure comprises 397 residues: MFHRIEEALEDLKKGKVVIVCDDENRENEGDFIALAEYITPETINFMITHGRGLVCVPITEGYAERLQLEPMVSHNTDSHHTAFTVSIDHVSTTTGISAHERATTIQELLNPASKGADFNRPGHIFPLIAKEGGVLRRAGHTEAAVDLAKLCGAEPAGVICEIINEDGTMARVPDLIECAKQFDIKMITIEDLIAYRRHHETLVTREVEITLPTDFGTFHAIGYSNSLDTKEHIALVKGDISTGEPVLVRVHSECLTGDVFGSHRCDCGPQLHAALAQIEREGKGVLLYMRQEGRGIGLLNKLRAYKLQEEGFDTVEANEKLGFPADLRDYGIGAQILKDLGLQSLRLLTNNPRKIAGLQGYDLEVIERVPLQMPAKEENKSYLQTKVNKLGHLLNL.

The DHBP synthase stretch occupies residues 1 to 199; that stretch reads MFHRIEEALE…IEDLIAYRRH (199 aa). D-ribulose 5-phosphate is bound by residues 26–27, Asp-31, 138–142, and Glu-162; these read RE and RAGHT. Glu-27 lines the Mg(2+) pocket. His-141 is a Mg(2+) binding site. Residues 200–397 form a GTP cyclohydrolase II region; sequence HETLVTREVE…VNKLGHLLNL (198 aa). 250-254 provides a ligand contact to GTP; that stretch reads RVHSE. Cys-255, Cys-266, and Cys-268 together coordinate Zn(2+). Residues Gln-271, 293-295, and Thr-315 each bind GTP; that span reads EGR. Asp-327 functions as the Proton acceptor; for GTP cyclohydrolase activity in the catalytic mechanism. The Nucleophile; for GTP cyclohydrolase activity role is filled by Arg-329. The GTP site is built by Thr-350 and Lys-355.

This sequence in the N-terminal section; belongs to the DHBP synthase family. The protein in the C-terminal section; belongs to the GTP cyclohydrolase II family. It depends on Mg(2+) as a cofactor. Mn(2+) serves as cofactor. Zn(2+) is required as a cofactor.

The catalysed reaction is D-ribulose 5-phosphate = (2S)-2-hydroxy-3-oxobutyl phosphate + formate + H(+). The enzyme catalyses GTP + 4 H2O = 2,5-diamino-6-hydroxy-4-(5-phosphoribosylamino)-pyrimidine + formate + 2 phosphate + 3 H(+). It functions in the pathway cofactor biosynthesis; riboflavin biosynthesis; 2-hydroxy-3-oxobutyl phosphate from D-ribulose 5-phosphate: step 1/1. The protein operates within cofactor biosynthesis; riboflavin biosynthesis; 5-amino-6-(D-ribitylamino)uracil from GTP: step 1/4. Functionally, catalyzes the conversion of D-ribulose 5-phosphate to formate and 3,4-dihydroxy-2-butanone 4-phosphate. Its function is as follows. Catalyzes the conversion of GTP to 2,5-diamino-6-ribosylamino-4(3H)-pyrimidinone 5'-phosphate (DARP), formate and pyrophosphate. The protein is Riboflavin biosynthesis protein RibBA of Bacillus cereus (strain B4264).